We begin with the raw amino-acid sequence, 161 residues long: MKNQTPCRVSKITTITQNKRVRYEYFIEQEFEAGISLLGWEVKSLRAGIVHINDSYILLKDSEAFLLGATLRPLIVASSHILYSPMRSRKLLLRRRELDTLLGKVHRKGYTIVPISLYWRNSLAKIQLGIAKGKKQYDKRHCIKEREWLLNKARITKLVHR.

This sequence belongs to the SmpB family.

The protein localises to the cytoplasm. Functionally, required for rescue of stalled ribosomes mediated by trans-translation. Binds to transfer-messenger RNA (tmRNA), required for stable association of tmRNA with ribosomes. tmRNA and SmpB together mimic tRNA shape, replacing the anticodon stem-loop with SmpB. tmRNA is encoded by the ssrA gene; the 2 termini fold to resemble tRNA(Ala) and it encodes a 'tag peptide', a short internal open reading frame. During trans-translation Ala-aminoacylated tmRNA acts like a tRNA, entering the A-site of stalled ribosomes, displacing the stalled mRNA. The ribosome then switches to translate the ORF on the tmRNA; the nascent peptide is terminated with the 'tag peptide' encoded by the tmRNA and targeted for degradation. The ribosome is freed to recommence translation, which seems to be the essential function of trans-translation. This chain is SsrA-binding protein, found in Baumannia cicadellinicola subsp. Homalodisca coagulata.